A 368-amino-acid chain; its full sequence is MAKSKKIVAATSGSRSRSSRAGLAFPVGRVHRLLRKGHFADRIGSGSAVYLAAVLEYLTAEILELAGNAARDNRKTRINPRHIQLAVRNDEELSKLFTGVVIPSGGTLPHIWPALIPNEAKDSSTASASFNAPAKSATVKALAAAKSAGKKPAAVSSSSAAASSSSSASSSSSVAPKKPVRGFTILSKKTLHLGQTLYVVNGDLTEVRCDAVVHPTNGTMSFAGQVGGAIRAAAGAGVDAEVNSYMSEHSQLQVTKAAITSGHNLPSKWIVHVHSPNYSNAATATDALTQTIRNALTLADTKSIKTIAFPSIGSGNNHFPKHIAAQTILQAISAYFMSIMSSSIKEVYFVLFDQESINVYNAELINTN.

The disordered stretch occupies residues 154 to 177 (AVSSSSAAASSSSSASSSSSVAPK). Residues 184–368 (TILSKKTLHL…VYNAELINTN (185 aa)) form the Macro domain. Positions 203, 204, 225, 226, 275, 313, 314, 315, 316, and 317 each coordinate a glycoprotein.

Belongs to the histone H2A family. As to quaternary structure, the nucleosome is a histone octamer containing two molecules each of H2A, H2B, H3 and H4 assembled in one H3-H4 heterotetramer and two H2A-H2B heterodimers.

It localises to the nucleus. It is found in the chromosome. Functionally, variant histone H2A which replaces conventional H2A in a subset of nucleosomes where it represses transcription. Nucleosomes wrap and compact DNA into chromatin, limiting DNA accessibility to the cellular machineries which require DNA as a template. Histones thereby play a central role in transcription regulation, DNA repair, DNA replication and chromosomal stability. DNA accessibility is regulated via a complex set of post-translational modifications of histones, also called histone code, and nucleosome remodeling. Its function is as follows. Specifically binds poly-ADP-ribose and plays a key role in NAD(+) metabolism. Able to bind to the ends of poly-ADP-ribose chains created by PARP1 and cap them. This prevents PARP1 from further addition of ADP-ribose and thus limits the consumption of nuclear NAD(+), allowing the cell to maintain proper NAD(+) levels in both the nucleus and the mitochondria to promote proper mitochondrial respiration. This is Histone macroH2A1.1 from Capsaspora owczarzaki (strain ATCC 30864).